The sequence spans 180 residues: uncharacterized protein (180 aa).

This is an uncharacterized protein from Homo sapiens (Human).